Reading from the N-terminus, the 366-residue chain is Peptide chain release factor 2 (366 aa).

Glutamine 246 is modified (N5-methylglutamine).

This sequence belongs to the prokaryotic/mitochondrial release factor family. In terms of processing, methylated by PrmC. Methylation increases the termination efficiency of RF2.

The protein resides in the cytoplasm. Its function is as follows. Peptide chain release factor 2 directs the termination of translation in response to the peptide chain termination codons UGA and UAA. The polypeptide is Peptide chain release factor 2 (Frankia casuarinae (strain DSM 45818 / CECT 9043 / HFP020203 / CcI3)).